The chain runs to 508 residues: uncharacterized protein (508 aa).

One can recognise a Resolvase/invertase-type recombinase catalytic domain in the interval lysine 3 to alanine 163. Serine 11 acts as the O-(5'-phospho-DNA)-serine intermediate in catalysis. Residues proline 175–isoleucine 290 constitute a DNA-binding region (recombinase).

This is an uncharacterized protein from Escherichia coli (strain K12).